The chain runs to 448 residues: uncharacterized protein (448 aa).

The helical transmembrane segment at 19 to 41 threads the bilayer; the sequence is LGLLVPFLLLLFSCTNTVGYGVL. The 77-residue stretch at 105 to 181 folds into the SH3b domain; that stretch reads YSYATSVLDG…CFSHGLSLFD (77 aa).

It localises to the membrane. This is an uncharacterized protein from Treponema pallidum (strain Nichols).